Here is a 444-residue protein sequence, read N- to C-terminus: Methylenetetrahydrofolate--tRNA-(uracil-5-)-methyltransferase TrmFO (444 aa).

Residue 10–15 participates in FAD binding; sequence GAGLAG.

This sequence belongs to the MnmG family. TrmFO subfamily. Requires FAD as cofactor.

Its subcellular location is the cytoplasm. It carries out the reaction uridine(54) in tRNA + (6R)-5,10-methylene-5,6,7,8-tetrahydrofolate + NADH + H(+) = 5-methyluridine(54) in tRNA + (6S)-5,6,7,8-tetrahydrofolate + NAD(+). The catalysed reaction is uridine(54) in tRNA + (6R)-5,10-methylene-5,6,7,8-tetrahydrofolate + NADPH + H(+) = 5-methyluridine(54) in tRNA + (6S)-5,6,7,8-tetrahydrofolate + NADP(+). Catalyzes the folate-dependent formation of 5-methyl-uridine at position 54 (M-5-U54) in all tRNAs. The polypeptide is Methylenetetrahydrofolate--tRNA-(uracil-5-)-methyltransferase TrmFO (Streptococcus pneumoniae serotype 4 (strain ATCC BAA-334 / TIGR4)).